The following is a 282-amino-acid chain: Transcription factor LBX1 (282 aa).

Positions 1 to 20 are enriched in basic and acidic residues; that stretch reads MTSKEDGKAAPGEERRRSPL. A disordered region spans residues 1–36; the sequence is MTSKEDGKAAPGEERRRSPLDHLPPPANSNKPLTPF. Residues 125–184 constitute a DNA-binding region (homeobox); sequence RRKSRTAFTNHQIYELEKRFLYQKYLSPADRDQIAQQLGLTNAQVITWFQNRRAKLKRDL. Positions 210–282 are disordered; sequence ELEQNSEASG…EEDEEIDVDD (73 aa). Residues 218-227 show a composition bias toward gly residues; it reads SGGGGGGGCG. The span at 269–282 shows a compositional bias: acidic residues; it reads CSEDEEDEEIDVDD.

As to quaternary structure, interacts with SKOR1 which acts as a transcriptional corepressor. Expressed in the dorsal part of the spinal cord and hindbrain and in presumptive myogenic cells in lateral regions of differentiating somites.

The protein localises to the nucleus. Transcription factor required for the development of GABAergic interneurons in the dorsal horn of the spinal cord and migration and further development of hypaxial muscle precursor cells for limb muscles, diaphragm and hypoglossal cord. This chain is Transcription factor LBX1 (Lbx1), found in Mus musculus (Mouse).